The primary structure comprises 215 residues: 3-demethoxyubiquinol 3-hydroxylase (215 aa).

Residues E64, E94, H97, E146, E178, and H181 each contribute to the Fe cation site.

The protein belongs to the COQ7 family. It depends on Fe cation as a cofactor.

Its subcellular location is the cell membrane. It carries out the reaction a 5-methoxy-2-methyl-3-(all-trans-polyprenyl)benzene-1,4-diol + AH2 + O2 = a 3-demethylubiquinol + A + H2O. The protein operates within cofactor biosynthesis; ubiquinone biosynthesis. Its function is as follows. Catalyzes the hydroxylation of 2-nonaprenyl-3-methyl-6-methoxy-1,4-benzoquinol during ubiquinone biosynthesis. The chain is 3-demethoxyubiquinol 3-hydroxylase from Coxiella burnetii (strain CbuG_Q212) (Coxiella burnetii (strain Q212)).